The sequence spans 513 residues: Cytochrome P450 monooxygenase ARMGADRAFT_1018418 (513 aa).

Residues 1–21 (MTHASSAWFLAAVVIVTFIVV) traverse the membrane as a helical segment. Cysteine 435 lines the heme pocket. An N-linked (GlcNAc...) asparagine glycan is attached at asparagine 442.

This sequence belongs to the cytochrome P450 family. It depends on heme as a cofactor.

It localises to the membrane. It participates in secondary metabolite biosynthesis. In terms of biological role, cytochrome P450 monooxygenase, part of the gene cluster that mediates the biosynthesis of melleolides, a range of antifungal and phytotoxic polyketide derivatives composed of an orsellinic acid (OA) moiety esterified to various sesquiterpene alcohols. The first step in melleolides biosynthesis is performed by the delta(6)-protoilludene synthase PRO1 which catalyzes the cyclization of farnesyl diphosphate to protoilludene. The orsellinic acid synthase armB produces OA by condensing acetyl-CoA with 3 malonyl-CoA units in a three-round chain elongation reaction folowed by a C2-C7 ring closure. ArmB further catalyzes the trans-esterification of OA to the various sesquiterpene alcohols resulting from the hydroxylation of protoilludene. The melleolides cluster also includes 5 cytochrome P450 monooxygenases, 4 NAD(+)-dependent oxidoreductases, one flavin-dependent oxidoreductase, and one O-methyltransferase. The cytochrome P450 monooxygenases may be involved in protoilludene hydroxylation to elaborate melleolides with multiple alcohol groups, such as melleolide D, which carries alcohol functionalities at C-4, C-5, C-10, and C-13. The role of the NAD(+)-dependent enzymes remains unknown. Numerous melleolides, including arnamial, show 5'-O-methylation of the aromatic moiety which may be catalyzed by the methyltransferase encoded in the cluster. The flavin-dependent oxidoreductase might represent the dehydrogenase yielding the aldehyde in position 1 of arnamial and other melleolides. Finally, several halogenase localized outside of the cluster, are able to catalyze the transfer of a single chlorine atom to the melleolide backbone, resulting in a 6'-chloromelleolide product. In Armillaria gallica (Bulbous honey fungus), this protein is Cytochrome P450 monooxygenase ARMGADRAFT_1018418.